Here is a 114-residue protein sequence, read N- to C-terminus: Large ribosomal subunit protein bL19 (114 aa).

The protein belongs to the bacterial ribosomal protein bL19 family.

Functionally, this protein is located at the 30S-50S ribosomal subunit interface and may play a role in the structure and function of the aminoacyl-tRNA binding site. In Bacillus cytotoxicus (strain DSM 22905 / CIP 110041 / 391-98 / NVH 391-98), this protein is Large ribosomal subunit protein bL19.